The chain runs to 548 residues: Thermolysin (548 aa).

The N-terminal stretch at M1–A28 is a signal peptide. Positions S29 to S232 are cleaved as a propeptide — activation peptide. Positions 289, 291, 293, and 370 each coordinate Ca(2+). H374 is a Zn(2+) binding site. The active site involves E375. Zn(2+) is bound by residues H378 and E398. Residues E409, N415, D417, E419, E422, Y425, T426, I429, and D432 each contribute to the Ca(2+) site. H463 (proton donor) is an active-site residue.

It belongs to the peptidase M4 family. Ca(2+) is required as a cofactor. Requires Zn(2+) as cofactor.

It localises to the secreted. It catalyses the reaction Preferential cleavage: Xaa-|-Leu &gt; Xaa-|-Phe.. Extracellular zinc metalloprotease. This Bacillus thermoproteolyticus protein is Thermolysin (npr).